A 93-amino-acid chain; its full sequence is U8-theraphotoxin-Hs1b (93 aa).

The first 18 residues, 1–18 (MKAILLLAIFSVLTVAIC), serve as a signal peptide directing secretion. Disulfide bonds link cysteine 40–cysteine 54, cysteine 40–cysteine 81, cysteine 53–cysteine 66, and cysteine 84–cysteine 91.

The protein belongs to the neurotoxin 27 (Jztx-72) family. ICK-72 subfamily. In terms of tissue distribution, expressed by the venom gland.

The protein resides in the secreted. Functionally, probable neurotoxin with ion channel impairing activity. In Cyriopagopus schmidti (Chinese bird spider), this protein is U8-theraphotoxin-Hs1b.